Here is a 373-residue protein sequence, read N- to C-terminus: MLNKNTIFFGLLLFIPISLLGHWLHWDEVSIFLTASLAIIPLAAFMGEATEEIAIVVGPTLGGLLNATFGNATELILAFIALKSGLISVVKATITGSIISNLLLVMGFAMLLGGLRYKEQVFQSEVARVNASSMNLAVIAILLPTAVEHTSNGIGEETLQTLSVAVAIVLIIVYGLTLLFSMKTHSYLCEVGEIDQQSSSAMESGDKIPEKKPEDVNLWFWLGILLVVTITVAIESELLVNSLESATESLGLTALFTGVILLPVIGNAAEHFTAVTVAMKNKMDLSLSVAVGSTLQIALFVAPVLVIAGWIMGQPMDLDFNPFELVAVAVSVLIANSISSDGKSNWLEGSLLLATYIVIGLAFFFHPVVPEIG.

11 helical membrane-spanning segments follow: residues 6–26 (TIFFGLLLFIPISLLGHWLHW), 29–49 (VSIFLTASLAIIPLAAFMGEA), 61–81 (LGGLLNATFGNATELILAFIA), 94–114 (ITGSIISNLLLVMGFAMLLGG), 134–154 (MNLAVIAILLPTAVEHTSNGI), 162–182 (LSVAVAIVLIIVYGLTLLFSM), 220–240 (FWLGILLVVTITVAIESELLV), 249–269 (SLGLTALFTGVILLPVIGNAA), 291–311 (VGSTLQIALFVAPVLVIAGWI), 318–338 (LDFNPFELVAVAVSVLIANSI), and 349–369 (GSLLLATYIVIGLAFFFHPVV).

This sequence belongs to the Ca(2+):cation antiporter (CaCA) (TC 2.A.19) family. Cation/proton exchanger (CAX) subfamily.

The protein resides in the cell inner membrane. Functionally, ca(+)/H(+) antiporter that extrudes calcium in exchange for external protons. Plays an important role in salt tolerance. Does not transport sodium or lithium. The polypeptide is Ca(2+)/H(+) antiporter (Aphanothece halophytica).